Consider the following 71-residue polypeptide: Large ribosomal subunit protein uL29 (71 aa).

This sequence belongs to the universal ribosomal protein uL29 family.

This chain is Large ribosomal subunit protein uL29, found in Rickettsia massiliae (strain Mtu5).